The primary structure comprises 429 residues: Fez family zinc finger protein 1 (429 aa).

The Engrailed homology 1 repressor motif lies at 29 to 44; it reads PLAFSIERIMARTPEP. 6 consecutive C2H2-type zinc fingers follow at residues 247–269, 275–297, 303–325, 331–353, 359–381, and 387–410; these read FTCE…MPVH, FVCK…KIIH, HKCN…TRIH, FICE…KLTH, FKCN…MHTH, and FTCP…RKLH. Residues 409-429 form a disordered region; the sequence is LHDISPGPHSPPTPTGNTEGQ.

Belongs to the krueppel C2H2-type zinc-finger protein family.

The protein resides in the nucleus. Functionally, transcription repressor. Involved in the development of the forebrain region. The protein is Fez family zinc finger protein 1 (fezf1) of Danio rerio (Zebrafish).